A 160-amino-acid polypeptide reads, in one-letter code: Ribosome maturation factor RimP (160 aa).

Belongs to the RimP family.

Its subcellular location is the cytoplasm. In terms of biological role, required for maturation of 30S ribosomal subunits. The protein is Ribosome maturation factor RimP of Cronobacter sakazakii (strain ATCC BAA-894) (Enterobacter sakazakii).